The sequence spans 76 residues: Small ribosomal subunit protein bS18 (76 aa).

This sequence belongs to the bacterial ribosomal protein bS18 family. In terms of assembly, part of the 30S ribosomal subunit. Forms a tight heterodimer with protein bS6.

In terms of biological role, binds as a heterodimer with protein bS6 to the central domain of the 16S rRNA, where it helps stabilize the platform of the 30S subunit. The polypeptide is Small ribosomal subunit protein bS18 (Oceanobacillus iheyensis (strain DSM 14371 / CIP 107618 / JCM 11309 / KCTC 3954 / HTE831)).